Consider the following 321-residue polypeptide: 5,10-methylenetetrahydromethanopterin reductase (321 aa).

The protein belongs to the mer family. As to quaternary structure, homotetramer.

The protein resides in the cytoplasm. The catalysed reaction is 5-methyl-5,6,7,8-tetrahydromethanopterin + oxidized coenzyme F420-(gamma-L-Glu)(n) + H(+) = 5,10-methylenetetrahydromethanopterin + reduced coenzyme F420-(gamma-L-Glu)(n). The protein operates within one-carbon metabolism; methanogenesis from CO(2); methyl-coenzyme M from 5,10-methylene-5,6,7,8-tetrahydromethanopterin: step 1/2. In terms of biological role, catalyzes the reversible reduction of methylene-H(4)MPT to methyl-H(4)MPT. This is 5,10-methylenetetrahydromethanopterin reductase from Methanothermobacter marburgensis (strain ATCC BAA-927 / DSM 2133 / JCM 14651 / NBRC 100331 / OCM 82 / Marburg) (Methanobacterium thermoautotrophicum).